A 140-amino-acid chain; its full sequence is Ribosome maturation factor RimP (140 aa).

The protein belongs to the RimP family.

The protein localises to the cytoplasm. Its function is as follows. Required for maturation of 30S ribosomal subunits. This is Ribosome maturation factor RimP from Campylobacter jejuni subsp. doylei (strain ATCC BAA-1458 / RM4099 / 269.97).